The following is a 142-amino-acid chain: Transcriptional regulator MraZ (142 aa).

SpoVT-AbrB domains lie at 5 to 47 (THTP…PTET) and 76 to 119 (ASDT…DATE).

This sequence belongs to the MraZ family. In terms of assembly, forms oligomers.

Its subcellular location is the cytoplasm. It localises to the nucleoid. The polypeptide is Transcriptional regulator MraZ (Cutibacterium acnes (strain DSM 16379 / KPA171202) (Propionibacterium acnes)).